Consider the following 222-residue polypeptide: Probable pyridoxal 5'-phosphate synthase subunit SNO3 (222 aa).

58-60 (GES) serves as a coordination point for L-glutamine. The Nucleophile role is filled by Cys-91. Residues Arg-120 and 151 to 152 (IR) contribute to the L-glutamine site. Active-site charge relay system residues include His-197 and Glu-199.

The protein belongs to the glutaminase PdxT/SNO family.

It catalyses the reaction aldehydo-D-ribose 5-phosphate + D-glyceraldehyde 3-phosphate + L-glutamine = pyridoxal 5'-phosphate + L-glutamate + phosphate + 3 H2O + H(+). It carries out the reaction L-glutamine + H2O = L-glutamate + NH4(+). Its pathway is cofactor biosynthesis; pyridoxal 5'-phosphate biosynthesis. Its function is as follows. Catalyzes the hydrolysis of glutamine to glutamate and ammonia as part of the biosynthesis of pyridoxal 5'-phosphate. The resulting ammonia molecule is channeled to the active site of a SNZ isoform. The chain is Probable pyridoxal 5'-phosphate synthase subunit SNO3 (SNO3) from Saccharomyces cerevisiae (strain ATCC 204508 / S288c) (Baker's yeast).